The sequence spans 152 residues: MKKRLFVLSLILLVALDQLSKFWIVSHIALGEVKPFIPGIVSLTYLQNNGAAFSILQDQQWFFVAITVLVIGYAIYYLATHPHLNIWKQLALLLIISGGIGNFIDRLRLAYVIDMVHLDFVDFAIFNVADSYLTVGVILLVICLWKEEDYGD.

The next 3 helical transmembrane spans lie at 5–25, 61–81, and 84–104; these read LFVLSLILLVALDQLSKFWIV, WFFVAITVLVIGYAIYYLATH, and LNIWKQLALLLIISGGIGNFI. Catalysis depends on residues aspartate 114 and aspartate 130. The helical transmembrane segment at 125–145 threads the bilayer; sequence IFNVADSYLTVGVILLVICLW.

It belongs to the peptidase A8 family.

It localises to the cell membrane. It carries out the reaction Release of signal peptides from bacterial membrane prolipoproteins. Hydrolyzes -Xaa-Yaa-Zaa-|-(S,diacylglyceryl)Cys-, in which Xaa is hydrophobic (preferably Leu), and Yaa (Ala or Ser) and Zaa (Gly or Ala) have small, neutral side chains.. It participates in protein modification; lipoprotein biosynthesis (signal peptide cleavage). This protein specifically catalyzes the removal of signal peptides from prolipoproteins. The chain is Lipoprotein signal peptidase from Streptococcus pyogenes serotype M6 (strain ATCC BAA-946 / MGAS10394).